We begin with the raw amino-acid sequence, 988 residues long: Transcription regulator srbA precursor (988 aa).

The Cytoplasmic segment spans residues 1–427 (MSTPGIGGDF…SSWHARAISH (427 aa)). Disordered stretches follow at residues 53–85 (AFPE…SDAM) and 108–169 (GDLN…KKRA). Residues 125 to 136 (SLSVHSNSPLSS) are compositionally biased toward low complexity. The interval 165–178 (SKKRAHNVIEKRYR) is basic motif. The bHLH domain maps to 165–236 (SKKRAHNVIE…SKATEYIRHL (72 aa)). The helix-loop-helix motif stretch occupies residues 179–236 (ANLNEKIAELRDSVPSLRASYKQANGNSGDDDDDGVTSASKLNKASILSKATEYIRHL). Residues 226 to 260 (LSKATEYIRHLEIRNKRLEEENTALKIRLRQLDKA) adopt a coiled-coil conformation. The span at 267–291 (SAASVSSPSDCTVSTESGASSSPSV) shows a compositional bias: polar residues. The disordered stretch occupies residues 267-313 (SAASVSSPSDCTVSTESGASSSPSVFSHAEDVPSDHSPTSSHPPEGL). Over residues 301–310 (DHSPTSSHPP) the composition is skewed to low complexity. A helical membrane pass occupies residues 428-447 (FLMLAILVVGSAFIVFVYLF). Over 448-988 (NSDPRRQYSA…SDNLLLSDES (541 aa)) the chain is Lumenal. Residues 866–881 (PPSPMSKASDMLSSSS) show a composition bias toward low complexity. Residues 866–900 (PPSPMSKASDMLSSSSDDGEDGASQRNNNIIPHPM) are disordered.

In terms of processing, in low oxygen or sterol conditions, undergoes proteolytic cleavage by rhomboid-type protease rbdB and is released as soluble transcription factor from the membrane.

Its subcellular location is the endoplasmic reticulum membrane. It is found in the nucleus. In terms of biological role, precursor of the transcription factor srbA, which is embedded in the endoplasmic reticulum membrane. Low oxygen or sterol conditions promote processing of this form, releasing the transcription factor form that translocates into the nucleus and activates transcription of genes required for adaptation to anaerobic growth. Transcription factor that regulates sterol biosynthesis and hyphal morphology. Plays a critical role in ergosterol biosynthesis, resistance to the azole class of antifungal drugs, and in maintenance of cell polarity. Directly binds erg11A/cyp51A upstream DNA sequence at tandem repeats, called TR34 and TR46, that produce duplicated binding sites. Also mediates regulation of iron acquisition in response to hypoxia and low iron conditions via activation of extra- and intracellular siderophore production. Positively regulates the expression of the other hypoxia adaptation key transcription factor srbB. Required for the azole-sensing and response to azole stress. Binds the high-affinity sites 5'-A-T-C-G/A-T/G-A/G-C/T-G/C-A-T-3' of target promoters. Required for virulence in murine models of invasive pulmonary aspergillosis (IPA). The chain is Transcription regulator srbA precursor from Aspergillus fumigatus (strain ATCC MYA-4609 / CBS 101355 / FGSC A1100 / Af293) (Neosartorya fumigata).